Reading from the N-terminus, the 285-residue chain is Probable endonuclease 4 (285 aa).

Zn(2+) is bound by residues H69, H109, E145, D179, H182, H216, D229, H231, and E261.

The protein belongs to the AP endonuclease 2 family. Requires Zn(2+) as cofactor.

It catalyses the reaction Endonucleolytic cleavage to 5'-phosphooligonucleotide end-products.. Its function is as follows. Endonuclease IV plays a role in DNA repair. It cleaves phosphodiester bonds at apurinic or apyrimidinic (AP) sites, generating a 3'-hydroxyl group and a 5'-terminal sugar phosphate. The chain is Probable endonuclease 4 from Escherichia fergusonii (strain ATCC 35469 / DSM 13698 / CCUG 18766 / IAM 14443 / JCM 21226 / LMG 7866 / NBRC 102419 / NCTC 12128 / CDC 0568-73).